A 512-amino-acid chain; its full sequence is Extracellular serine/threonine protein kinase CeFam20 (512 aa).

The Cytoplasmic segment spans residues 1 to 6 (MRCNIK). A helical; Signal-anchor for type II membrane protein membrane pass occupies residues 7 to 26 (RLFTLAIGVFAATLVIISFS). Residues 27-512 (KDNYEREWKQ…QDKKDDKKTV (486 aa)) lie on the Lumenal side of the membrane. An intrachain disulfide couples cysteine 110 to cysteine 144. The N-linked (GlcNAc...) asparagine glycan is linked to asparagine 113. 3 residues coordinate ATP: glutamine 176, lysine 192, and glutamate 213. Glutamate 213 lines the Mn(2+) pocket. Residue asparagine 242 is glycosylated (N-linked (GlcNAc...) asparagine). 2 disulfide bridges follow: cysteine 268–cysteine 284 and cysteine 273–cysteine 277. ATP is bound at residue 295-298 (QVFL). 2 disulfides stabilise this stretch: cysteine 333-cysteine 409 and cysteine 410-cysteine 469. Aspartate 366 is a catalytic residue. ATP contacts are provided by glutamate 371 and aspartate 387. Aspartate 387 lines the Mn(2+) pocket. The disordered stretch occupies residues 486–512 (PDVSDAEQNDEEQSEEHQDKKDDKKTV). A compositionally biased stretch (acidic residues) spans 489–499 (SDAEQNDEEQS). A compositionally biased stretch (basic and acidic residues) spans 500 to 512 (EEHQDKKDDKKTV).

The protein belongs to the FAM20 family. Mn(2+) serves as cofactor.

It is found in the golgi apparatus membrane. The protein localises to the secreted. The enzyme catalyses L-seryl-[protein] + ATP = O-phospho-L-seryl-[protein] + ADP + H(+). The catalysed reaction is L-threonyl-[protein] + ATP = O-phospho-L-threonyl-[protein] + ADP + H(+). In terms of biological role, golgi serine/threonine protein kinase that phosphorylates secretory pathway proteins within Ser-x-Glu/pSer motifs. The polypeptide is Extracellular serine/threonine protein kinase CeFam20 (Caenorhabditis elegans).